We begin with the raw amino-acid sequence, 213 residues long: Probable elongation factor 1-beta/1-delta 1 (213 aa).

It belongs to the EF-1-beta/EF-1-delta family. As to quaternary structure, EF-1 is composed of 4 subunits: alpha, beta, delta, and gamma.

EF-1-beta and EF-1-delta stimulate the exchange of GDP bound to EF-1-alpha to GTP. The chain is Probable elongation factor 1-beta/1-delta 1 (eef-1B.1) from Caenorhabditis elegans.